The primary structure comprises 886 residues: Valine--tRNA ligase (886 aa).

The 'HIGH' region motif lies at 53 to 63 (PNVTGSLHMGH). The short motif at 540 to 544 (KMSKS) is the 'KMSKS' region element. Residue Lys543 participates in ATP binding. A coiled-coil region spans residues 819–851 (TIDVAAERRRLEKELAGAQKELASTAAKLANAD).

This sequence belongs to the class-I aminoacyl-tRNA synthetase family. ValS type 1 subfamily. Monomer.

The protein resides in the cytoplasm. It catalyses the reaction tRNA(Val) + L-valine + ATP = L-valyl-tRNA(Val) + AMP + diphosphate. Its function is as follows. Catalyzes the attachment of valine to tRNA(Val). As ValRS can inadvertently accommodate and process structurally similar amino acids such as threonine, to avoid such errors, it has a 'posttransfer' editing activity that hydrolyzes mischarged Thr-tRNA(Val) in a tRNA-dependent manner. This chain is Valine--tRNA ligase, found in Mycobacterium tuberculosis (strain CDC 1551 / Oshkosh).